We begin with the raw amino-acid sequence, 466 residues long: Uronate isomerase (466 aa).

It belongs to the metallo-dependent hydrolases superfamily. Uronate isomerase family.

It carries out the reaction D-glucuronate = D-fructuronate. The enzyme catalyses aldehydo-D-galacturonate = keto-D-tagaturonate. It participates in carbohydrate metabolism; pentose and glucuronate interconversion. The sequence is that of Uronate isomerase from Streptococcus agalactiae serotype V (strain ATCC BAA-611 / 2603 V/R).